The chain runs to 245 residues: Probable ABC transporter ATP-binding protein p29 (245 aa).

The 239-residue stretch at 7-245 folds into the ABC transporter domain; it reads LSFEKVSIIY…KEQLYKIYDN (239 aa). 39–46 serves as a coordination point for ATP; sequence GKSGVGKS.

Belongs to the ABC transporter superfamily.

Part of a high-affinity transport system. The protein is Probable ABC transporter ATP-binding protein p29 (p29) of Mycoplasma genitalium (strain ATCC 33530 / DSM 19775 / NCTC 10195 / G37) (Mycoplasmoides genitalium).